The following is a 313-amino-acid chain: MRILLANPRGFCAGVERAINIVEKVIAIYGPPIYVRHELVHNSYVVNTLRNQGVVFIEQIHEVPDGAVIIFSAHGVSKAIRKEVQSRNLTIFDATCPLVTKVHMEVARASHKGIETILIGHYGHPEVEGTIGQYNNTDGGIYLVESLEDVWQLKVKNKNNLCFITQTTFSVDKSSAIIDALRQRFPFIKGPHKQDICYATTNRQEAVRNLTMATDIVLVVGSKNSSNSNRLVELAQQTGKPAYLIDCASDIKENWLQGINIIGVTAGASAPNILVLQVILKLQSFGAESAEELRGYEEKMIFDLPRNLHVVNK.

Cysteine 12 is a binding site for [4Fe-4S] cluster. (2E)-4-hydroxy-3-methylbut-2-enyl diphosphate is bound by residues histidine 41 and histidine 74. Residues histidine 41 and histidine 74 each contribute to the dimethylallyl diphosphate site. Isopentenyl diphosphate-binding residues include histidine 41 and histidine 74. Cysteine 96 is a binding site for [4Fe-4S] cluster. Histidine 124 is a binding site for (2E)-4-hydroxy-3-methylbut-2-enyl diphosphate. A dimethylallyl diphosphate-binding site is contributed by histidine 124. Histidine 124 is an isopentenyl diphosphate binding site. Glutamate 126 functions as the Proton donor in the catalytic mechanism. Threonine 167 is a binding site for (2E)-4-hydroxy-3-methylbut-2-enyl diphosphate. Residue cysteine 197 participates in [4Fe-4S] cluster binding. Residues serine 225, serine 226, asparagine 227, and serine 269 each contribute to the (2E)-4-hydroxy-3-methylbut-2-enyl diphosphate site. Dimethylallyl diphosphate contacts are provided by serine 225, serine 226, asparagine 227, and serine 269. Residues serine 225, serine 226, asparagine 227, and serine 269 each contribute to the isopentenyl diphosphate site.

This sequence belongs to the IspH family. It depends on [4Fe-4S] cluster as a cofactor.

It carries out the reaction isopentenyl diphosphate + 2 oxidized [2Fe-2S]-[ferredoxin] + H2O = (2E)-4-hydroxy-3-methylbut-2-enyl diphosphate + 2 reduced [2Fe-2S]-[ferredoxin] + 2 H(+). It catalyses the reaction dimethylallyl diphosphate + 2 oxidized [2Fe-2S]-[ferredoxin] + H2O = (2E)-4-hydroxy-3-methylbut-2-enyl diphosphate + 2 reduced [2Fe-2S]-[ferredoxin] + 2 H(+). Its pathway is isoprenoid biosynthesis; dimethylallyl diphosphate biosynthesis; dimethylallyl diphosphate from (2E)-4-hydroxy-3-methylbutenyl diphosphate: step 1/1. The protein operates within isoprenoid biosynthesis; isopentenyl diphosphate biosynthesis via DXP pathway; isopentenyl diphosphate from 1-deoxy-D-xylulose 5-phosphate: step 6/6. Its function is as follows. Catalyzes the conversion of 1-hydroxy-2-methyl-2-(E)-butenyl 4-diphosphate (HMBPP) into a mixture of isopentenyl diphosphate (IPP) and dimethylallyl diphosphate (DMAPP). Acts in the terminal step of the DOXP/MEP pathway for isoprenoid precursor biosynthesis. This is 4-hydroxy-3-methylbut-2-enyl diphosphate reductase from Baumannia cicadellinicola subsp. Homalodisca coagulata.